The primary structure comprises 362 residues: 3-dehydroquinate synthase (362 aa).

Residues 71-76, 105-109, 129-130, Lys142, Lys151, and 169-172 contribute to the NAD(+) site; these read DGEQYK, GVIGD, TT, and CLST. The Zn(2+) site is built by Glu184, His247, and His264.

It belongs to the sugar phosphate cyclases superfamily. Dehydroquinate synthase family. Requires Co(2+) as cofactor. It depends on Zn(2+) as a cofactor. The cofactor is NAD(+).

The protein localises to the cytoplasm. It carries out the reaction 7-phospho-2-dehydro-3-deoxy-D-arabino-heptonate = 3-dehydroquinate + phosphate. It participates in metabolic intermediate biosynthesis; chorismate biosynthesis; chorismate from D-erythrose 4-phosphate and phosphoenolpyruvate: step 2/7. In terms of biological role, catalyzes the conversion of 3-deoxy-D-arabino-heptulosonate 7-phosphate (DAHP) to dehydroquinate (DHQ). This chain is 3-dehydroquinate synthase, found in Vibrio atlanticus (strain LGP32) (Vibrio splendidus (strain Mel32)).